The primary structure comprises 310 residues: Aspartate carbamoyltransferase catalytic subunit (310 aa).

Carbamoyl phosphate contacts are provided by R55 and T56. K83 contributes to the L-aspartate binding site. R105, H133, and Q136 together coordinate carbamoyl phosphate. L-aspartate-binding residues include R166 and R220. Carbamoyl phosphate contacts are provided by G261 and P262.

Belongs to the aspartate/ornithine carbamoyltransferase superfamily. ATCase family. Heterododecamer (2C3:3R2) of six catalytic PyrB chains organized as two trimers (C3), and six regulatory PyrI chains organized as three dimers (R2).

The catalysed reaction is carbamoyl phosphate + L-aspartate = N-carbamoyl-L-aspartate + phosphate + H(+). The protein operates within pyrimidine metabolism; UMP biosynthesis via de novo pathway; (S)-dihydroorotate from bicarbonate: step 2/3. Catalyzes the condensation of carbamoyl phosphate and aspartate to form carbamoyl aspartate and inorganic phosphate, the committed step in the de novo pyrimidine nucleotide biosynthesis pathway. The sequence is that of Aspartate carbamoyltransferase catalytic subunit from Chlorobium phaeovibrioides (strain DSM 265 / 1930) (Prosthecochloris vibrioformis (strain DSM 265)).